We begin with the raw amino-acid sequence, 754 residues long: LON peptidase N-terminal domain and RING finger protein 2 (754 aa).

TPR repeat units lie at residues 23–58 (IAQR…QPDR) and 59–91 (GLCL…GALR). Positions 112–136 (PLSAENPGGEPEAPGEGGPAPEPRA) are disordered. Low complexity predominate over residues 115 to 125 (AENPGGEPEAP). TPR repeat units lie at residues 197 to 230 (LRRL…APDD), 231 to 264 (NSLL…EPLL), and 266 to 298 (KGHQ…NPEC). A disordered region spans residues 398–439 (GLKRQFPDDVEDAPDLNAPGKIPKKDLSLQRSPNSETEESQG). A compositionally biased stretch (polar residues) spans 426-439 (LQRSPNSETEESQG). A TPR 6 repeat occupies 447–483 (FECALCMRLLFEPVTTPCGHTFCLKCLERCLDHAPHC). The segment at 449–487 (CALCMRLLFEPVTTPCGHTFCLKCLERCLDHAPHCPLCK) adopts an RING-type zinc-finger fold. The region spanning 528–737 (MSELSNLTRD…AIRRILVIIT (210 aa)) is the Lon N-terminal domain.

The polypeptide is LON peptidase N-terminal domain and RING finger protein 2 (LONRF2) (Homo sapiens (Human)).